The sequence spans 944 residues: Serine/threonine-protein kinase ATG1 (944 aa).

The Protein kinase domain occupies 24-327 (FNIGSEIGKG…FENFFTHQVV (304 aa)). ATP-binding positions include 30–38 (IGKGSFAQV) and Lys53. The active-site Proton acceptor is the Asp167. Positions 344–423 (RQESRDPRSA…NSPREGGEGL (80 aa)) are disordered. The span at 356–367 (SGSPSLSSRSPR) shows a compositional bias: low complexity. The short motif at 428-431 (PVAQ) is the LIR element. Disordered regions lie at residues 443–475 (YDSVTGRNRASPPTSLLDQVRRNRALSNPPITE), 512–572 (LGDA…GSAS), 777–801 (QLPDDHPSHPSNHGTESIASSAGSP), 860–895 (EGSGSETRRLSTGKEAEREAVKEVSGGELDSDEEAH), and 925–944 (AVRRRSGDMTPRSVPSHASS). Composition is skewed to polar residues over residues 447–459 (TGRNRASPPTSLL) and 516–549 (SQRSGPITRRYTQQGAPTSTTGAISTPYSRNALA). Low complexity predominate over residues 563-572 (SLSASPGSAS). Positions 785–801 (HPSNHGTESIASSAGSP) are enriched in polar residues. A compositionally biased stretch (basic and acidic residues) spans 865-881 (ETRRLSTGKEAEREAVK). Residues 924 to 930 (QAVRRRS) are required for Cvt trafficking.

This sequence belongs to the protein kinase superfamily. Ser/Thr protein kinase family. APG1/unc-51/ULK1 subfamily. Homodimer. Dimerization requires the presence of ATG13. Forms a ternary complex with ATG13 and ATG17.

It is found in the cytoplasm. The protein resides in the preautophagosomal structure membrane. It carries out the reaction L-seryl-[protein] + ATP = O-phospho-L-seryl-[protein] + ADP + H(+). It catalyses the reaction L-threonyl-[protein] + ATP = O-phospho-L-threonyl-[protein] + ADP + H(+). Functionally, serine/threonine protein kinase involved in the cytoplasm to vacuole transport (Cvt) and found to be essential in autophagy, where it is required for the formation of autophagosomes. Involved in the clearance of protein aggregates which cannot be efficiently cleared by the proteasome. Required for selective autophagic degradation of the nucleus (nucleophagy) as well as for mitophagy which contributes to regulate mitochondrial quantity and quality by eliminating the mitochondria to a basal level to fulfill cellular energy requirements and preventing excess ROS production. Also involved in endoplasmic reticulum-specific autophagic process, in selective removal of ER-associated degradation (ERAD) substrates. Plays a key role in ATG9 and ATG23 cycling through the pre-autophagosomal structure and is necessary to promote ATG18 binding to ATG9 through phosphorylation of ATG9. Catalyzes phosphorylation of ATG4, decreasing the interaction between ATG4 and ATG8 and impairing deconjugation of PE-conjugated forms of ATG8. Autophagy is required for proper vegetative growth, asexual/sexual reproduction, and full virulence. Autophagy is particularly involved in the biosynthesis of deoxynivalenol (DON), an important virulence determinant. The polypeptide is Serine/threonine-protein kinase ATG1 (Gibberella zeae (strain ATCC MYA-4620 / CBS 123657 / FGSC 9075 / NRRL 31084 / PH-1) (Wheat head blight fungus)).